The primary structure comprises 417 residues: Phosphoglycerate kinase (417 aa).

Residues 24–26 (DLN), Arg-44, 67–70 (HLGR), Arg-126, and Arg-170 each bind substrate. Residues Lys-220, Gly-316, Glu-347, and 373-376 (GGDS) contribute to the ATP site.

This sequence belongs to the phosphoglycerate kinase family. In terms of assembly, monomer.

The protein resides in the cytoplasm. It catalyses the reaction (2R)-3-phosphoglycerate + ATP = (2R)-3-phospho-glyceroyl phosphate + ADP. It functions in the pathway carbohydrate degradation; glycolysis; pyruvate from D-glyceraldehyde 3-phosphate: step 2/5. The protein is Phosphoglycerate kinase of Renibacterium salmoninarum (strain ATCC 33209 / DSM 20767 / JCM 11484 / NBRC 15589 / NCIMB 2235).